A 25-amino-acid polypeptide reads, in one-letter code: Caerin-1.4 (25 aa).

Position 25 is a leucine amide (Leu-25).

It belongs to the frog skin active peptide (FSAP) family. Caerin subfamily. Expressed by the skin parotoid and/or rostral glands.

It localises to the secreted. In terms of biological role, antibacterial peptide, that adopts an alpha helical conformation which can disrupt bacterial membranes. Each caerin displays a different antimicrobial specificity. The protein is Caerin-1.4 of Ranoidea caerulea (Green tree frog).